Here is a 125-residue protein sequence, read N- to C-terminus: Transmembrane protein 14EP (125 aa).

The next 2 helical transmembrane spans lie at 9–29 (VPLY…GISG) and 81–101 (ILTL…LIVS).

This sequence belongs to the TMEM14 family.

It is found in the membrane. The sequence is that of Transmembrane protein 14EP (TMEM14EP) from Homo sapiens (Human).